Here is a 404-residue protein sequence, read N- to C-terminus: Pectate lyase E (404 aa).

Positions 1 to 41 (MNNSRMSSVSTQKTTGRSALGTKSALAAIIATTMMVSVASA) are cleaved as a signal peptide. Ca(2+) is bound by residues Asp-182 and Asp-225. The active site involves Arg-278.

It belongs to the polysaccharide lyase 1 family. PLBC subfamily. The cofactor is Ca(2+).

It localises to the secreted. It carries out the reaction Eliminative cleavage of (1-&gt;4)-alpha-D-galacturonan to give oligosaccharides with 4-deoxy-alpha-D-galact-4-enuronosyl groups at their non-reducing ends.. Its pathway is glycan metabolism; pectin degradation; 2-dehydro-3-deoxy-D-gluconate from pectin: step 2/5. Involved in maceration and soft-rotting of plant tissue. Pectate lyases have been implicated as pathogenicity factors which induce maceration or rotting of plant tissue. PelE is sufficient to induce these effects under laboratory conditions. The chain is Pectate lyase E (pelE) from Dickeya chrysanthemi (Pectobacterium chrysanthemi).